We begin with the raw amino-acid sequence, 910 residues long: MFSILKKIFGTANDRTIKKLFSDIAKINSLEPAIQKLSDEELKNKTVEFKKKLKNGATLDDIAYEAFAVVREASRRVYGMRHFDVQLIGGLVLHRGMITEMRTGEGKTLVATLPAYLNALAEKGVHVVTVNDYLVSRDSASMGKIYNFLGLSVGCIVAGMTDEAKREAYNSDITYATNNELGFDYLRDNMKYSLQERVLRPFNFAIIDEVDSILIDEARTPLVISGPVNDNSELYGKVDKLVRMLNVSDFEKDEKLKTINLTESGISHVESLLSQADIIKPNSGLYDFENLSLVHYVNQALRAHNMFMIDVDYLVRDGKVMIIDEFTGRVMEGRRYSEGLHQALEAKENVKIQNENQTLASITFQNYFRNYPKLSGMTGTAMTEAPELKDIYNLDVVAVPTHNKVTRRDLDDEIYGSKKEKYDAILKLIKDCYDRGQPVLVGTVSIEKSEEISNVLNKNKIPHKVLNAKFHEQEAFIIAQAGRFKAVTIATNMAGRGTDIMLGGNPEMLIEQIDRKSLTNAAYKEKVNEIKAQTAEEKKQVIAAGGLFVIGTERHESRRIDNQLRGRSGRQGDPGNTKFFLSLDDDLMRIFASERISGVLRTLGLKDGEAIHHPMISRSLEKAQQKVEGHNYEIRKNLLRFDDVMNDQRKIIYEQRTEIIKSKDSYDFLSSTTEELAKKIVLTFMPAGSYREDWDIENLSVELHRTFAIKLDQNLISKNDVTEEEVTKIVIQTADSIYKSKEEAYSPDLMHNAVKYILLTTLDQVWKDHLHSLDHLRQGISLRAYAQKDPLSEYKREAFNLFEHMLNNLKELFIQTVYHFHIDLKHIQKEDISLENKKLQNNMHESREDPAFSKYNAGSNLETDLRPVISRINPEDRDPKNPTSWGKVSRNELCPCGSGKKYKYCHGLNE.

ATP is bound by residues Gln86, 104 to 108 (GEGKT), and Asp499. Cys894, Cys896, Cys905, and His906 together coordinate Zn(2+).

It belongs to the SecA family. In terms of assembly, monomer and homodimer. Part of the essential Sec protein translocation apparatus which comprises SecA, SecYEG and auxiliary proteins SecDF-YajC and YidC. Zn(2+) serves as cofactor.

The protein resides in the cell inner membrane. The protein localises to the cytoplasm. It carries out the reaction ATP + H2O + cellular proteinSide 1 = ADP + phosphate + cellular proteinSide 2.. In terms of biological role, part of the Sec protein translocase complex. Interacts with the SecYEG preprotein conducting channel. Has a central role in coupling the hydrolysis of ATP to the transfer of proteins into and across the cell membrane, serving both as a receptor for the preprotein-SecB complex and as an ATP-driven molecular motor driving the stepwise translocation of polypeptide chains across the membrane. In Rickettsia bellii (strain RML369-C), this protein is Protein translocase subunit SecA.